The chain runs to 957 residues: Glycine dehydrogenase (decarboxylating) (957 aa).

Lys-708 bears the N6-(pyridoxal phosphate)lysine mark.

Belongs to the GcvP family. In terms of assembly, the glycine cleavage system is composed of four proteins: P, T, L and H. Requires pyridoxal 5'-phosphate as cofactor.

It catalyses the reaction N(6)-[(R)-lipoyl]-L-lysyl-[glycine-cleavage complex H protein] + glycine + H(+) = N(6)-[(R)-S(8)-aminomethyldihydrolipoyl]-L-lysyl-[glycine-cleavage complex H protein] + CO2. In terms of biological role, the glycine cleavage system catalyzes the degradation of glycine. The P protein binds the alpha-amino group of glycine through its pyridoxal phosphate cofactor; CO(2) is released and the remaining methylamine moiety is then transferred to the lipoamide cofactor of the H protein. In Shigella boydii serotype 18 (strain CDC 3083-94 / BS512), this protein is Glycine dehydrogenase (decarboxylating).